Here is a 156-residue protein sequence, read N- to C-terminus: ATP synthase subunit b (156 aa).

Residues 7 to 29 (LFAQMVVFLVLAWFTMKFVWPPL) form a helical membrane-spanning segment.

This sequence belongs to the ATPase B chain family. In terms of assembly, F-type ATPases have 2 components, F(1) - the catalytic core - and F(0) - the membrane proton channel. F(1) has five subunits: alpha(3), beta(3), gamma(1), delta(1), epsilon(1). F(0) has three main subunits: a(1), b(2) and c(10-14). The alpha and beta chains form an alternating ring which encloses part of the gamma chain. F(1) is attached to F(0) by a central stalk formed by the gamma and epsilon chains, while a peripheral stalk is formed by the delta and b chains.

Its subcellular location is the cell inner membrane. F(1)F(0) ATP synthase produces ATP from ADP in the presence of a proton or sodium gradient. F-type ATPases consist of two structural domains, F(1) containing the extramembraneous catalytic core and F(0) containing the membrane proton channel, linked together by a central stalk and a peripheral stalk. During catalysis, ATP synthesis in the catalytic domain of F(1) is coupled via a rotary mechanism of the central stalk subunits to proton translocation. Its function is as follows. Component of the F(0) channel, it forms part of the peripheral stalk, linking F(1) to F(0). The chain is ATP synthase subunit b from Burkholderia pseudomallei (strain 668).